Here is a 126-residue protein sequence, read N- to C-terminus: Small ribosomal subunit protein uS8 (126 aa).

The protein belongs to the universal ribosomal protein uS8 family. As to quaternary structure, part of the 30S ribosomal subunit. Contacts proteins S5 and S12.

One of the primary rRNA binding proteins, it binds directly to 16S rRNA central domain where it helps coordinate assembly of the platform of the 30S subunit. This is Small ribosomal subunit protein uS8 from Desulfovibrio desulfuricans (strain ATCC 27774 / DSM 6949 / MB).